A 312-amino-acid polypeptide reads, in one-letter code: Protease HtpX homolog (312 aa).

2 helical membrane-spanning segments follow: residues 6-26 (TAVLLAGLTALFMVVGFAIGG) and 28-48 (GGMMVALLVAAGMNLFSYWYA). Histidine 130 serves as a coordination point for Zn(2+). Glutamate 131 is a catalytic residue. Histidine 134 lines the Zn(2+) pocket. A run of 2 helical transmembrane segments spans residues 145–165 (ITASIAGAISMLANFGLFFGG) and 173–193 (PFGGISAILMAILAPIAAMVV). Glutamate 202 contacts Zn(2+). Positions 287–297 (PAPARAAPARG) are enriched in low complexity. Residues 287–312 (PAPARAAPARGPWGGNTGGTRRGPWG) form a disordered region. Gly residues predominate over residues 298–312 (PWGGNTGGTRRGPWG).

The protein belongs to the peptidase M48B family. Zn(2+) is required as a cofactor.

It localises to the cell inner membrane. The polypeptide is Protease HtpX homolog (Azorhizobium caulinodans (strain ATCC 43989 / DSM 5975 / JCM 20966 / LMG 6465 / NBRC 14845 / NCIMB 13405 / ORS 571)).